The sequence spans 502 residues: Glycerol kinase (502 aa).

Threonine 14 contacts ADP. Residues threonine 14, threonine 15, and serine 16 each contribute to the ATP site. Threonine 14 lines the sn-glycerol 3-phosphate pocket. Residue arginine 18 participates in ADP binding. Positions 84, 85, and 136 each coordinate sn-glycerol 3-phosphate. Glycerol-binding residues include arginine 84, glutamate 85, and tyrosine 136. Residue histidine 232 is modified to Phosphohistidine; by HPr. Aspartate 246 lines the sn-glycerol 3-phosphate pocket. Residues aspartate 246 and glutamine 247 each coordinate glycerol. ADP-binding residues include threonine 268 and glycine 311. ATP-binding residues include threonine 268, glycine 311, glutamine 315, and glycine 412. Glycine 412 and asparagine 416 together coordinate ADP.

Belongs to the FGGY kinase family. Homotetramer and homodimer (in equilibrium). Post-translationally, the phosphoenolpyruvate-dependent sugar phosphotransferase system (PTS), including enzyme I, and histidine-containing protein (HPr) are required for the phosphorylation, which leads to the activation of the enzyme.

The enzyme catalyses glycerol + ATP = sn-glycerol 3-phosphate + ADP + H(+). The protein operates within polyol metabolism; glycerol degradation via glycerol kinase pathway; sn-glycerol 3-phosphate from glycerol: step 1/1. Activated by phosphorylation and inhibited by fructose 1,6-bisphosphate (FBP). Key enzyme in the regulation of glycerol uptake and metabolism. Catalyzes the phosphorylation of glycerol to yield sn-glycerol 3-phosphate. The chain is Glycerol kinase from Streptococcus pneumoniae serotype 19F (strain G54).